The following is a 699-amino-acid chain: Pollen-specific leucine-rich repeat extensin-like protein 4 (699 aa).

The signal sequence occupies residues 1-39 (MPFYKQPWVFSKVFVLAMAKPPSFGCCFFLLFFSFLSSS). N-linked (GlcNAc...) asparagine glycosylation occurs at N106. LRR repeat units follow at residues 133–157 (VTVV…LGLM), 158–180 (TDVA…SFEK), 182–205 (KLMH…VLSW), 206–229 (PDVK…LFKK), 231–251 (LDAI…SLGE), 253–275 (PASV…IGNM), 276–299 (KNLN…IGKL), 301–323 (NVTV…FVGL), and 324–347 (TSVE…ICQL). The N-linked (GlcNAc...) asparagine glycan is linked to N301. The N-linked (GlcNAc...) asparagine glycan is linked to N352. Residues 411–699 (KCAGGSSTPS…SPPPPMFAGY (289 aa)) are disordered. Pro residues-rich tracts occupy residues 421–466 (KPSP…PVPT), 482–504 (KPSP…PQPD), 518–659 (PPPA…PPAP), and 690–699 (SPPPPMFAGY). The interval 517–699 (SPPPAPVNSP…SPPPPMFAGY (183 aa)) is contains the Ser-Pro(4) repeats.

In terms of processing, hydroxylated on proline residues in the S-P-P-P-P repeat. Post-translationally, O-glycosylated on hydroxyprolines. Expressed in flowers, stamen, pollen, and pollinated carpels.

It is found in the secreted. The protein resides in the cell wall. In terms of biological role, modulates cell morphogenesis by regulating cell wall formation and assembly, and/or growth polarization. This chain is Pollen-specific leucine-rich repeat extensin-like protein 4 (PEX4), found in Arabidopsis thaliana (Mouse-ear cress).